The chain runs to 164 residues: 2-keto-3-deoxy-D-glycero-D-galacto-9-phosphonononic acid phosphatase (164 aa).

Mg(2+)-binding residues include Asp-10 and Asp-12. Residues Thr-34, 54–56, 64–67, and Lys-80 contribute to the substrate site; these read TGE and RAEK. Asp-103 is a binding site for Mg(2+). A substrate-binding site is contributed by Asn-106.

The protein belongs to the KdsC family. Homotetramer. Requires Mg(2+) as cofactor.

The enzyme catalyses 3-deoxy-D-glycero-beta-D-galacto-non-2-ulopyranosonate 9-phosphate + H2O = 3-deoxy-D-glycero-beta-D-galacto-non-2-ulopyranosonate + phosphate. Its function is as follows. Involved in the biosynthesis of 2-keto-3-deoxy-D-glycero-D-galacto-nononic acid used in cell-wall polysaccharides. Catalyzes the hydrolysis of 2-keto-3-deoxy-D-glycero-D-galacto-9-phosphonononic acid (KDN-9-P) to yield 2-keto-3-deoxy-D-glycero-D-galacto-nononic acid (KDN). Also able to hydrolyze N-acetylneuraminate-9-phosphate (Neu5NAc-9-P), 2-keto-3-deoxy-D-manno-octulosonate-8-phosphate (KDO-8-P), phosphoenolpyruvate (PEP), gluconate 6-phosphate, tyrosine phosphate ester and glucose-6-P as substrate. The polypeptide is 2-keto-3-deoxy-D-glycero-D-galacto-9-phosphonononic acid phosphatase (Bacteroides thetaiotaomicron (strain ATCC 29148 / DSM 2079 / JCM 5827 / CCUG 10774 / NCTC 10582 / VPI-5482 / E50)).